A 77-amino-acid polypeptide reads, in one-letter code: U18-lycotoxin-Ls1a (77 aa).

Residues 1–22 form the signal peptide; it reads MSPKMQALLLLLGLITLLVVHA. Residues 23-34 constitute a propeptide that is removed on maturation; it reads EEELSENTESER. 4 disulfide bridges follow: Cys36-Cys51, Cys43-Cys56, Cys50-Cys67, and Cys58-Cys65.

The protein belongs to the neurotoxin 02 (plectoxin) family. Expressed by the venom gland.

The protein resides in the secreted. The sequence is that of U18-lycotoxin-Ls1a from Lycosa singoriensis (Wolf spider).